The sequence spans 123 residues: Large ribosomal subunit protein uL14 (123 aa).

It belongs to the universal ribosomal protein uL14 family. In terms of assembly, part of the 50S ribosomal subunit. Forms a cluster with proteins L3 and L19. In the 70S ribosome, L14 and L19 interact and together make contacts with the 16S rRNA in bridges B5 and B8.

Its function is as follows. Binds to 23S rRNA. Forms part of two intersubunit bridges in the 70S ribosome. In Actinobacillus succinogenes (strain ATCC 55618 / DSM 22257 / CCUG 43843 / 130Z), this protein is Large ribosomal subunit protein uL14.